A 229-amino-acid chain; its full sequence is MRIAGAIKFVIAVALFLLTFYVISQVFEIKMYSNLGNIFARSAPDTVAHPTTKAPRYRCGISKVCPEKHFAFKIASGAANVVGPKICVDDNILMSGVKNNVGRGINTALVNGKTGALIETTYHDLWGGEVGPFIEFLKKIPDGTIVLMATYDDGATKLNDDARKRIAELGSSLISVLAFRDNWVFVGGKGIKTKSPFEQHIKNNKDTNKYEGWPEVVEMEGCIPQKINE.

Residues M1 to S24 form the signal peptide. 2 cysteine pairs are disulfide-bonded: C59/C87 and C65/C222. Residues K68 to K226 enclose the GG-type lectin domain.

The protein belongs to the FAM3 family.

It localises to the secreted. Functionally, involved in retinal laminar formation. In Xenopus tropicalis (Western clawed frog), this protein is Protein FAM3C (fam3c).